We begin with the raw amino-acid sequence, 48 residues long: ATP synthase protein 8 (48 aa).

A helical membrane pass occupies residues 4-24 (LVPFFFVNQVVFAFIVLTVLI).

The protein belongs to the ATPase protein 8 family. In terms of assembly, F-type ATPases have 2 components, CF(1) - the catalytic core - and CF(0) - the membrane proton channel.

It localises to the mitochondrion membrane. Its function is as follows. Mitochondrial membrane ATP synthase (F(1)F(0) ATP synthase or Complex V) produces ATP from ADP in the presence of a proton gradient across the membrane which is generated by electron transport complexes of the respiratory chain. F-type ATPases consist of two structural domains, F(1) - containing the extramembraneous catalytic core and F(0) - containing the membrane proton channel, linked together by a central stalk and a peripheral stalk. During catalysis, ATP synthesis in the catalytic domain of F(1) is coupled via a rotary mechanism of the central stalk subunits to proton translocation. Part of the complex F(0) domain. Minor subunit located with subunit a in the membrane. This Emericella nidulans (Aspergillus nidulans) protein is ATP synthase protein 8 (atp8).